We begin with the raw amino-acid sequence, 363 residues long: Neutral protease 2 homolog NFIA_102630 (363 aa).

Positions Met1–Ala19 are cleaved as a signal peptide. Positions Leu20 to Arg172 are excised as a propeptide. Intrachain disulfides connect Cys178–Cys250 and Cys257–Cys275. His300 contacts Zn(2+). Glu301 is an active-site residue. Zn(2+) is bound by residues His304 and Asp315.

It belongs to the peptidase M35 family. Zn(2+) serves as cofactor.

The protein localises to the secreted. It carries out the reaction Preferential cleavage of bonds with hydrophobic residues in P1'. Also 3-Asn-|-Gln-4 and 8-Gly-|-Ser-9 bonds in insulin B chain.. In terms of biological role, secreted metalloproteinase that allows assimilation of proteinaceous substrates. Shows high activities on basic nuclear substrates such as histone and protamine. The chain is Neutral protease 2 homolog NFIA_102630 from Neosartorya fischeri (strain ATCC 1020 / DSM 3700 / CBS 544.65 / FGSC A1164 / JCM 1740 / NRRL 181 / WB 181) (Aspergillus fischerianus).